Reading from the N-terminus, the 156-residue chain is Large ribosomal subunit protein uL15 (156 aa).

The span at 1-11 shows a compositional bias: basic and acidic residues; that stretch reads MKLNDLRDKPG. The tract at residues 1–44 is disordered; sequence MKLNDLRDKPGSVKARKRVGRGIGSGTGKTGGRGVKGQKSRSGV. Positions 21–35 are enriched in gly residues; the sequence is RGIGSGTGKTGGRGV.

Belongs to the universal ribosomal protein uL15 family. Part of the 50S ribosomal subunit.

Its function is as follows. Binds to the 23S rRNA. The sequence is that of Large ribosomal subunit protein uL15 from Brucella abortus (strain S19).